We begin with the raw amino-acid sequence, 200 residues long: NAD(P)H-dependent FMN reductase C4B3.06c (200 aa).

Residues arginine 22, 96–99 (QYNG), and tyrosine 126 each bind FMN.

Homodimer.

Its subcellular location is the cytoplasm. It is found in the nucleus. The enzyme catalyses FMNH2 + NADP(+) = FMN + NADPH + 2 H(+). It catalyses the reaction FMNH2 + NAD(+) = FMN + NADH + 2 H(+). Functionally, has several reductase activities that are NAD(P)H-dependent and involve FMN as a cofactor. May be involved in ferric iron assimilation. In Schizosaccharomyces pombe (strain 972 / ATCC 24843) (Fission yeast), this protein is NAD(P)H-dependent FMN reductase C4B3.06c.